The chain runs to 306 residues: MIRIGTRGSLLATTQAGGIRDALRAKGHEAELVIVTTAGDQSAAPVEQIGVGVFTAALREAIADDVVDVAVHSYKDLPTAADPRFVIPAIPPREDYRDALVARDGLVLGELPAGSVIGTSSPRRAAQLRALGLGLEIRPLRGNLDTRLSRVSNGDLDGVVVARAGLARIGRLDHITETLEPVQVLPAPAQGALAVECRSEATDLVAVLAELDHADTRAAVTAERALLAELEAGCTAPVGAIAEVVESIDEEGRVFDELSLRGCAAALDGSDVIRASGIGTPDRAAELGLAVARELLDLGARALIGR.

Position 234 is an S-(dipyrrolylmethanemethyl)cysteine (cysteine 234).

This sequence belongs to the HMBS family. Monomer. Dipyrromethane is required as a cofactor.

It carries out the reaction 4 porphobilinogen + H2O = hydroxymethylbilane + 4 NH4(+). Its pathway is porphyrin-containing compound metabolism; protoporphyrin-IX biosynthesis; coproporphyrinogen-III from 5-aminolevulinate: step 2/4. Functionally, tetrapolymerization of the monopyrrole PBG into the hydroxymethylbilane pre-uroporphyrinogen in several discrete steps. The chain is Porphobilinogen deaminase from Mycobacteroides abscessus (strain ATCC 19977 / DSM 44196 / CCUG 20993 / CIP 104536 / JCM 13569 / NCTC 13031 / TMC 1543 / L948) (Mycobacterium abscessus).